The primary structure comprises 494 residues: Ribonuclease H (494 aa).

2 disordered regions span residues 79 to 148 and 205 to 231; these read NRRR…APPP and RSGLEKSDRGDGAASLSALSEPQVGLR. Polar residues-rich tracts occupy residues 84–100 and 131–143; these read GSTSKKAQVKSSVNQLA and PTTSRASGETRTS. The 217-residue stretch at 272–488 folds into the RNase H type-1 domain; that stretch reads SSVPQVVYVD…ADVLAVAGAR (217 aa). Mg(2+) is bound by residues D281, E325, D374, and D480.

It belongs to the RNase H family. Monomer. Mg(2+) serves as cofactor.

The catalysed reaction is Endonucleolytic cleavage to 5'-phosphomonoester.. In terms of biological role, endonuclease that specifically degrades the RNA of RNA-DNA hybrids. This is Ribonuclease H (RNH1) from Crithidia fasciculata.